Reading from the N-terminus, the 103-residue chain is Small ribosomal subunit protein uS10 (103 aa).

The protein belongs to the universal ribosomal protein uS10 family. As to quaternary structure, part of the 30S ribosomal subunit.

Involved in the binding of tRNA to the ribosomes. This is Small ribosomal subunit protein uS10 from Persephonella marina (strain DSM 14350 / EX-H1).